A 265-amino-acid polypeptide reads, in one-letter code: MCMVIFAPLFAMFAFATCGGYSGGLRLSVDCVNKTESNLSIDIAFAYPFRLQQVTFEVPTCEGKEQQKLALVGDSSSSAEFFVTVAVFAFLYSLAATVVYIFFQNKYRENNRGPLIDFIVTVVFSFLWLVGSSAWAKGLSDVKVATDPKEVLLLMSACKQPSNKCMAVHSPVMSSLNTSVVFGFLNFILWAGNIWFVFKETGWHSSGQRYLSDPMEKHSSSYNQGRYNQESYGSSGGYSQQANLGPTSDEFGQQPSGPTSFNNQI.

At M1 to V4 the chain is on the cytoplasmic side. The 202-residue stretch at M1–G202 folds into the MARVEL domain. A helical membrane pass occupies residues I5–L25. Over R26 to F81 the chain is Vesicular. N33 and N38 each carry an N-linked (GlcNAc...) asparagine glycan. Residues F82–F102 traverse the membrane as a helical segment. Residues F103 to P114 are Cytoplasmic-facing. A helical membrane pass occupies residues L115–W135. Topologically, residues A136–N177 are vesicular. A helical membrane pass occupies residues T178–F198. Over K199–I265 the chain is Cytoplasmic. 5 consecutive repeat copies span residues Y210–P214, Y222–R226, Y227–S231, Y232–G236, and Y238–A242. Positions Y210–A242 are 5 X approximate repeats. A Phosphoserine modification is found at S212. The span at S221–E230 shows a compositional bias: polar residues. Positions S221–I265 are disordered. Over residues Q240–I265 the composition is skewed to polar residues.

Belongs to the synaptophysin/synaptobrevin family.

It is found in the cytoplasmic vesicle. The protein localises to the secretory vesicle. The protein resides in the synaptic vesicle membrane. It localises to the synapse. Its subcellular location is the synaptosome. Functionally, intrinsic membrane protein of small synaptic vesicles. Probable vesicular channel protein. The chain is Synaptoporin (Synpr) from Mus musculus (Mouse).